Here is a 256-residue protein sequence, read N- to C-terminus: uncharacterized protein (256 aa).

The signal sequence occupies residues 1-24 (MIKRVNKLVLGISLLFLVISITAG). C25 carries N-palmitoyl cysteine lipidation. C25 carries the S-diacylglycerol cysteine lipid modification.

The protein belongs to the staphylococcal tandem lipoprotein family.

It localises to the cell membrane. This is an uncharacterized protein from Staphylococcus aureus (strain MW2).